The sequence spans 68 residues: Galectin-10 (68 aa).

Residues 1–68 (EPYLQVDFHT…LSISVLPDKY (68 aa)) form the Galectin domain.

In terms of assembly, interacts with CEL.

It is found in the cytoplasm. The protein localises to the cytosol. The protein resides in the cytoplasmic granule. Regulates immune responses through the recognition of cell-surface glycans. Essential for the anergy and suppressive function of CD25-positive regulatory T-cells (Treg). This Pongo pygmaeus (Bornean orangutan) protein is Galectin-10 (CLC).